We begin with the raw amino-acid sequence, 662 residues long: UvrABC system protein B (662 aa).

Residues 25–182 (KGIEKGEKFQ…KKLVEIQYER (158 aa)) enclose the Helicase ATP-binding domain. 38–45 (GVTGSGKT) lines the ATP pocket. The Beta-hairpin signature appears at 91–114 (YYDYYQPEAYVAQSDTYIEKDASI). In terms of domain architecture, Helicase C-terminal spans 429-595 (QIDDLYTSIQ…TIIKDIREVI (167 aa)). The 36-residue stretch at 622–657 (DKLIEKYEEEMREAAQNLQFEKAAHLRDVIYKLKRD) folds into the UVR domain.

It belongs to the UvrB family. As to quaternary structure, forms a heterotetramer with UvrA during the search for lesions. Interacts with UvrC in an incision complex.

The protein localises to the cytoplasm. The UvrABC repair system catalyzes the recognition and processing of DNA lesions. A damage recognition complex composed of 2 UvrA and 2 UvrB subunits scans DNA for abnormalities. Upon binding of the UvrA(2)B(2) complex to a putative damaged site, the DNA wraps around one UvrB monomer. DNA wrap is dependent on ATP binding by UvrB and probably causes local melting of the DNA helix, facilitating insertion of UvrB beta-hairpin between the DNA strands. Then UvrB probes one DNA strand for the presence of a lesion. If a lesion is found the UvrA subunits dissociate and the UvrB-DNA preincision complex is formed. This complex is subsequently bound by UvrC and the second UvrB is released. If no lesion is found, the DNA wraps around the other UvrB subunit that will check the other stand for damage. This is UvrABC system protein B from Clostridium botulinum (strain 657 / Type Ba4).